A 223-amino-acid polypeptide reads, in one-letter code: UPF0502 protein Shew185_1758 (223 aa).

Belongs to the UPF0502 family.

This is UPF0502 protein Shew185_1758 from Shewanella baltica (strain OS185).